A 20-amino-acid chain; its full sequence is D-alpha-glycerophosphatase (20 aa).

As to quaternary structure, monomer. Requires Mg(2+) as cofactor. It depends on Mn(2+) as a cofactor.

The protein resides in the cytoplasm. Its pathway is polyol metabolism; glycerol biosynthesis. In Bacillus licheniformis, this protein is D-alpha-glycerophosphatase.